The following is a 293-amino-acid chain: Elongation factor Ts (293 aa).

The interval 80-83 (TDFV) is involved in Mg(2+) ion dislocation from EF-Tu.

Belongs to the EF-Ts family.

It localises to the cytoplasm. In terms of biological role, associates with the EF-Tu.GDP complex and induces the exchange of GDP to GTP. It remains bound to the aminoacyl-tRNA.EF-Tu.GTP complex up to the GTP hydrolysis stage on the ribosome. The chain is Elongation factor Ts from Burkholderia lata (strain ATCC 17760 / DSM 23089 / LMG 22485 / NCIMB 9086 / R18194 / 383).